We begin with the raw amino-acid sequence, 691 residues long: MKEIQAIYVDLKKLRNIGIMAHIDAGKTTTTERILFYTGRKHNIGSVDDGTATMDWMVQEKERGITIVSAATTCMWKDHRINIIDTPGHVDFTIEVERALRVLDGAIAVFDAAAGVEPQSETVWRQADKYNVPRIAFMNKMDKIGADFDMAVKSMEKKLKANPIPVQMPMGAEDSFEGVIDLIEMKAIRWLDVEGTEMVYEEIPEKYLAKAEEMREDLLEKLAELDDEIMEMYLEGEEISNELIKKALREATLENKATPVFCGSAKMNRGVQPLLDGVLEYLPSPLDMPPVKGWNSDGEEIEVLPDENEPFTALAFKIQADPYVGKLTFFRVYSGRLEKGSYVYNSTKGKKERISRLIFMHADKREDVEYVRAGDIVAAIGLKDTKTGDTLCDEKRPVILEKMEFPEPVISIAIEPETKKDQDKLSKALTLLSDEDPSFRAYVDNETGETIISGMGELHLEIIVDRLKREFNTNVRVGQPQVAYRETIQVPAEAEGKYIRQSGGRGQYGHVVMRFEPIDLSKTFEFEDRIVGGVIPKEYIPAVEEGVREAAQSGYLSGYPMVGIKAILLDGSYHEVDSSEMAFKIAASMAFKEAVKKAQPVLLEPVMSVEITTPEEYMGNIIADLNSRRAHVESLDSRGHLRIIKALVPLSEMFGYATDLRSQSQGRATYTMVLAKYAKVPDKIAERIISK.

A tr-type G domain is found at 12-286; it reads KKLRNIGIMA…GVLEYLPSPL (275 aa). Residues 21 to 28, 85 to 89, and 139 to 142 contribute to the GTP site; these read AHIDAGKT, DTPGH, and NKMD.

It belongs to the TRAFAC class translation factor GTPase superfamily. Classic translation factor GTPase family. EF-G/EF-2 subfamily.

Its subcellular location is the cytoplasm. In terms of biological role, catalyzes the GTP-dependent ribosomal translocation step during translation elongation. During this step, the ribosome changes from the pre-translocational (PRE) to the post-translocational (POST) state as the newly formed A-site-bound peptidyl-tRNA and P-site-bound deacylated tRNA move to the P and E sites, respectively. Catalyzes the coordinated movement of the two tRNA molecules, the mRNA and conformational changes in the ribosome. The protein is Elongation factor G of Thermosipho melanesiensis (strain DSM 12029 / CIP 104789 / BI429).